We begin with the raw amino-acid sequence, 470 residues long: MQGHAMAVDAKTGNSLSERPTVAFAHLGCEKNRVDTEHMLGLLAEAGYGVSSDENDANLVVVNTCSFIQDAREESVRTLVGLAEQGKELIIAGCLAQHFQDELLESIPEAKAIVGTGDYQHIVEVLQQVEAGERVNRVSQTPTFVADENLPRYRTTGEAVAYLKVAEGCDYRCAFCIIPHLRGNQRSRTIESIVAEAHQLAEQGVQELILISQITTNYGLDLYGKPRLADLLKALGDVEIPWIRVHYAYPTGLTPAVLAAYRDVPNVLPYLDLPLQHSHPEVLRAMNRPWQADVNERLLDQIREQLPNAILRTTLIVGFPGETEDQFEHLAGFLERQRFDHVGIFTFSPEDGTAAATLPDSVPDEIAIARKDKLMTLQQPISAARNASWIGKTVDVLVEQHNPSTGEMIGRCSRFAPEVDGEVLVQPGDNGLQVNPGTMVPVQITGADIYDLSGHVVSAAHMVAAARAAT.

One can recognise an MTTase N-terminal domain in the interval 20–131 (PTVAFAHLGC…IVEVLQQVEA (112 aa)). Positions 29, 65, 94, 169, 173, and 176 each coordinate [4Fe-4S] cluster. The Radical SAM core domain maps to 155 to 384 (TTGEAVAYLK…MTLQQPISAA (230 aa)). Positions 387–458 (ASWIGKTVDV…IYDLSGHVVS (72 aa)) constitute a TRAM domain.

It belongs to the methylthiotransferase family. RimO subfamily. [4Fe-4S] cluster is required as a cofactor.

The protein localises to the cytoplasm. The catalysed reaction is L-aspartate(89)-[ribosomal protein uS12]-hydrogen + (sulfur carrier)-SH + AH2 + 2 S-adenosyl-L-methionine = 3-methylsulfanyl-L-aspartate(89)-[ribosomal protein uS12]-hydrogen + (sulfur carrier)-H + 5'-deoxyadenosine + L-methionine + A + S-adenosyl-L-homocysteine + 2 H(+). Functionally, catalyzes the methylthiolation of an aspartic acid residue of ribosomal protein uS12. This Synechococcus sp. (strain CC9311) protein is Ribosomal protein uS12 methylthiotransferase RimO.